Here is a 374-residue protein sequence, read N- to C-terminus: F-box/LRR-repeat protein 8 (374 aa).

Residues 2-48 (AEPGEQLPEEVLALIFRHLPLPDRAAAARVCRAWAAAATCSAVWHDT) enclose the F-box domain.

Directly interacts with SKP1 and CUL1.

Substrate-recognition component of the SCF (SKP1-CUL1-F-box protein)-type E3 ubiquitin ligase complex. The sequence is that of F-box/LRR-repeat protein 8 (FBXL8) from Bos taurus (Bovine).